We begin with the raw amino-acid sequence, 1161 residues long: PAN2-PAN3 deadenylation complex catalytic subunit pan2 (1161 aa).

WD repeat units lie at residues 20–59, 102–145, and 276–315; these read GLPT…RYTS, AHEE…DKLQ, and ANVS…HFNE. Residues 316-452 form a linker region; it reads MSKEVEFADV…GAKLNGEAED (137 aa). The USP domain occupies 453–822; that stretch reads DPLLKYSNVE…IPCVLAYQAR (370 aa). Residues 871–1049 enclose the Exonuclease domain; it reads VALDTEFVDL…VEDARMALRL (179 aa). 4 residues coordinate a divalent metal cation: D874, E876, D983, and D1042. Residues 1094 to 1161 are disordered; that stretch reads GTAVTMQNNS…GDFFGGSPLK (68 aa). The span at 1097–1110 shows a compositional bias: polar residues; that stretch reads VTMQNNSGRNTPST. Low complexity predominate over residues 1116 to 1129; it reads AAAAAATTSAPATP. A compositionally biased stretch (gly residues) spans 1145 to 1155; sequence TFGGPGTGDFF.

The protein belongs to the peptidase C19 family. PAN2 subfamily. As to quaternary structure, forms a heterotrimer with an asymmetric homodimer of the regulatory subunit pan3 to form the poly(A)-nuclease (PAN) deadenylation complex. A divalent metal cation is required as a cofactor.

The protein resides in the cytoplasm. The catalysed reaction is Exonucleolytic cleavage of poly(A) to 5'-AMP.. With respect to regulation, positively regulated by the regulatory subunit pan3. In terms of biological role, catalytic subunit of the poly(A)-nuclease (PAN) deadenylation complex, one of two cytoplasmic mRNA deadenylases involved in mRNA turnover. PAN specifically shortens poly(A) tails of RNA and the activity is stimulated by poly(A)-binding protein pab1. PAN deadenylation is followed by rapid degradation of the shortened mRNA tails by the CCR4-NOT complex. Deadenylated mRNAs are then degraded by two alternative mechanisms, namely exosome-mediated 3'-5' exonucleolytic degradation, or deadenylation-dependent mRNA decaping and subsequent 5'-3' exonucleolytic degradation by xrn1. May also be involved in post-transcriptional maturation of mRNA poly(A) tails. The sequence is that of PAN2-PAN3 deadenylation complex catalytic subunit pan2 from Aspergillus clavatus (strain ATCC 1007 / CBS 513.65 / DSM 816 / NCTC 3887 / NRRL 1 / QM 1276 / 107).